A 185-amino-acid polypeptide reads, in one-letter code: Ribosome-recycling factor (185 aa).

Belongs to the RRF family.

The protein resides in the cytoplasm. Responsible for the release of ribosomes from messenger RNA at the termination of protein biosynthesis. May increase the efficiency of translation by recycling ribosomes from one round of translation to another. In Alkalilimnicola ehrlichii (strain ATCC BAA-1101 / DSM 17681 / MLHE-1), this protein is Ribosome-recycling factor.